The primary structure comprises 119 residues: Ribonuclease P protein component (119 aa).

Belongs to the RnpA family. In terms of assembly, consists of a catalytic RNA component (M1 or rnpB) and a protein subunit.

It catalyses the reaction Endonucleolytic cleavage of RNA, removing 5'-extranucleotides from tRNA precursor.. Functionally, RNaseP catalyzes the removal of the 5'-leader sequence from pre-tRNA to produce the mature 5'-terminus. It can also cleave other RNA substrates such as 4.5S RNA. The protein component plays an auxiliary but essential role in vivo by binding to the 5'-leader sequence and broadening the substrate specificity of the ribozyme. The chain is Ribonuclease P protein component from Serratia proteamaculans (strain 568).